We begin with the raw amino-acid sequence, 360 residues long: Phospho-N-acetylmuramoyl-pentapeptide-transferase (360 aa).

A run of 10 helical transmembrane segments spans residues 26-46, 70-90, 94-114, 132-152, 168-188, 199-219, 239-259, 263-283, 288-308, and 338-358; these read AIMSVLTALILSLWMGPRLIA, GTPTMGGIMILAAITITALLW, SNPYIWAVLAVMLGYGVVGFV, WKYFWQSVIALVIAFALYMHG, VMPQLGLLYIVLTYFVIVGTS, GLAIMPTVMVAGGMAFIAWAT, LVVLCTAIVGAGLGFLWFNTY, VFMGDVGSLALGGALGTIAVL, LLLVIMGGVFVMETVSVILQV, and VIVRFWIITLMLVLIALATLK.

Belongs to the glycosyltransferase 4 family. MraY subfamily. It depends on Mg(2+) as a cofactor.

It is found in the cell inner membrane. The enzyme catalyses UDP-N-acetyl-alpha-D-muramoyl-L-alanyl-gamma-D-glutamyl-meso-2,6-diaminopimeloyl-D-alanyl-D-alanine + di-trans,octa-cis-undecaprenyl phosphate = di-trans,octa-cis-undecaprenyl diphospho-N-acetyl-alpha-D-muramoyl-L-alanyl-D-glutamyl-meso-2,6-diaminopimeloyl-D-alanyl-D-alanine + UMP. It functions in the pathway cell wall biogenesis; peptidoglycan biosynthesis. Its function is as follows. Catalyzes the initial step of the lipid cycle reactions in the biosynthesis of the cell wall peptidoglycan: transfers peptidoglycan precursor phospho-MurNAc-pentapeptide from UDP-MurNAc-pentapeptide onto the lipid carrier undecaprenyl phosphate, yielding undecaprenyl-pyrophosphoryl-MurNAc-pentapeptide, known as lipid I. This chain is Phospho-N-acetylmuramoyl-pentapeptide-transferase, found in Photobacterium profundum (strain SS9).